An 860-amino-acid polypeptide reads, in one-letter code: Leucine--tRNA ligase (860 aa).

The short motif at 42 to 52 (PYPSGRLHMGH) is the 'HIGH' region element. Residues 619–623 (KMSKS) carry the 'KMSKS' region motif. Position 622 (Lys-622) interacts with ATP.

This sequence belongs to the class-I aminoacyl-tRNA synthetase family.

The protein localises to the cytoplasm. It catalyses the reaction tRNA(Leu) + L-leucine + ATP = L-leucyl-tRNA(Leu) + AMP + diphosphate. The polypeptide is Leucine--tRNA ligase (Escherichia coli O9:H4 (strain HS)).